Reading from the N-terminus, the 378-residue chain is Queuine tRNA-ribosyltransferase (378 aa).

Residue Asp-91 is the Proton acceptor of the active site. Substrate contacts are provided by residues 91–95, Asp-145, Gln-197, and Gly-224; that span reads DSGGF. Residue Asp-274 is the Nucleophile of the active site. Positions 279-283 are RNA binding; important for wobble base 34 recognition; it reads TRLAR. Zn(2+)-binding residues include Cys-312, Cys-314, Cys-317, and His-343.

It belongs to the queuine tRNA-ribosyltransferase family. Homodimer. Within each dimer, one monomer is responsible for RNA recognition and catalysis, while the other monomer binds to the replacement base PreQ1. Zn(2+) serves as cofactor.

The enzyme catalyses 7-aminomethyl-7-carbaguanine + guanosine(34) in tRNA = 7-aminomethyl-7-carbaguanosine(34) in tRNA + guanine. The protein operates within tRNA modification; tRNA-queuosine biosynthesis. In terms of biological role, catalyzes the base-exchange of a guanine (G) residue with the queuine precursor 7-aminomethyl-7-deazaguanine (PreQ1) at position 34 (anticodon wobble position) in tRNAs with GU(N) anticodons (tRNA-Asp, -Asn, -His and -Tyr). Catalysis occurs through a double-displacement mechanism. The nucleophile active site attacks the C1' of nucleotide 34 to detach the guanine base from the RNA, forming a covalent enzyme-RNA intermediate. The proton acceptor active site deprotonates the incoming PreQ1, allowing a nucleophilic attack on the C1' of the ribose to form the product. After dissociation, two additional enzymatic reactions on the tRNA convert PreQ1 to queuine (Q), resulting in the hypermodified nucleoside queuosine (7-(((4,5-cis-dihydroxy-2-cyclopenten-1-yl)amino)methyl)-7-deazaguanosine). The sequence is that of Queuine tRNA-ribosyltransferase from Methylacidiphilum infernorum (isolate V4) (Methylokorus infernorum (strain V4)).